A 637-amino-acid polypeptide reads, in one-letter code: Chaperone protein HtpG (637 aa).

Residues 1-345 form an a; substrate-binding region; that stretch reads MSQQETHGFQ…SNDLPLNVSR (345 aa). Positions 346-562 are b; it reads EILQDNHVTK…EGEMSTQMIK (217 aa). A c region spans residues 563–637; that stretch reads LMQAAGQPVP…MNQMLLANMK (75 aa).

This sequence belongs to the heat shock protein 90 family. Homodimer.

It localises to the cytoplasm. Functionally, molecular chaperone. Has ATPase activity. This is Chaperone protein HtpG from Shewanella baltica (strain OS185).